The following is a 253-amino-acid chain: 5'/3'-nucleotidase SurE (253 aa).

Residues Asp-8, Asp-9, Ser-39, and Asn-92 each contribute to the a divalent metal cation site.

The protein belongs to the SurE nucleotidase family. A divalent metal cation is required as a cofactor.

It is found in the cytoplasm. The enzyme catalyses a ribonucleoside 5'-phosphate + H2O = a ribonucleoside + phosphate. The catalysed reaction is a ribonucleoside 3'-phosphate + H2O = a ribonucleoside + phosphate. It carries out the reaction [phosphate](n) + H2O = [phosphate](n-1) + phosphate + H(+). In terms of biological role, nucleotidase with a broad substrate specificity as it can dephosphorylate various ribo- and deoxyribonucleoside 5'-monophosphates and ribonucleoside 3'-monophosphates with highest affinity to 3'-AMP. Also hydrolyzes polyphosphate (exopolyphosphatase activity) with the preference for short-chain-length substrates (P20-25). Might be involved in the regulation of dNTP and NTP pools, and in the turnover of 3'-mononucleotides produced by numerous intracellular RNases (T1, T2, and F) during the degradation of various RNAs. The polypeptide is 5'/3'-nucleotidase SurE (Erwinia tasmaniensis (strain DSM 17950 / CFBP 7177 / CIP 109463 / NCPPB 4357 / Et1/99)).